The chain runs to 193 residues: uncharacterized protein (193 aa).

This is an uncharacterized protein from Mycoplasma pneumoniae (strain ATCC 29342 / M129 / Subtype 1) (Mycoplasmoides pneumoniae).